The following is a 1239-amino-acid chain: MSSAPRRPAKGADSFCTPEPESLGPGTPGFPEQEEDELHRTLGVERFEEILQEAGSRGGEEPGRSYGEEDFEYHRQSSHHIHHPLSTHLPPDARRRKTPQGPGRKPRRRPGASPTGETPTIEEGEEDEDEASEAEGARALTQPSPVSTPSSVQFFLQEDDSADRKAERTSPSSPAPLPHQEATPRASKGAQAGTQVEEAEAVAVASGTAGGDDGGASGRPLPKAQPGHRSYNLQERRRIGSMTGAEQALLPRVPTDEIEAQTLATADLDLMKSHRFEDVPGVRRHLVRKNAKGSTQSGREGREPGPTPRARPRAPHKPHEVFVELNELLLDKNQEPQWRETARWIKFEEDVEEETERWGKPHVASLSFRSLLELRRTLAHGAVLLDLDQQTLPGVAHQVVEQMVISDQIKAEDRANVLRALLLKHSHPSDEKDFSFPRNISAGSLGSLLGHHHGQGAESDPHVTEPLIGGVPETRLEVERERELPPPAPPAGITRSKSKHELKLLEKIPENAEATVVLVGCVEFLSRPTMAFVRLREAVELDAVLEVPVPVRFLFLLLGPSSANMDYHEIGRSISTLMSDKQFHEAAYLADEREDLLTAINAFLDCSVVLPPSEVQGEELLRSVAHFQRQMLKKREEQGRLLPTGAGLEPKSAQDKALLQMVEAAGAAEDDPLRRTGRPFGGLIRDVRRRYPHYLSDFRDALDPQCLAAVIFIYFAALSPAITFGGLLGEKTQDLIGVSELIMSTALQGVVFCLLGAQPLLVIGFSGPLLVFEEAFFSFCSSNHLEYLVGRVWIGFWLVLLALLMVALEGSFLVRFVSRFTQEIFAFLISLIFIYETFYKLVKIFQEHPLHGCSASNSSEVDGGENMTWAVARPTLGPGNRSLAGQSGQGKPRGQPNTALLSLVLMAGTFFIAFFLRKFKNSRFFPGRIRRVIGDFGVPIAILIMVLVDYSIEDTYTQKLSVPSGFSVTAPEKRGWVINPLGEKSPFPVWMMVASLLPAILVFILIFMETQITTLIISKKERMLQKGSGFHLDLLLIVAMGGICALFGLPWLAAATVRSVTHANALTVMSKAVAPGDKPKIQEVKEQRVTGLLVALLVGLSIVIGDLLRQIPLAVLFGIFLYMGVTSLNGIQFYERLHLLLMPPKHHPDVTYVKKVRTLRMHLFTALQLLCLALLWAVMSTAASLAFPFILILTVPLRMVVLTRIFTDREMKCLDANEAEPVFDEREGVDEYNEMPMPV.

Residues 1–237 (MSSAPRRPAK…HRSYNLQERR (237 aa)) are disordered. Residues 1–706 (MSSAPRRPAK…DFRDALDPQC (706 aa)) lie on the Cytoplasmic side of the membrane. Composition is skewed to basic and acidic residues over residues 37 to 49 (ELHR…RFEE) and 58 to 75 (GGEE…EYHR). 2 stretches are compositionally biased toward basic residues: residues 76-85 (QSSHHIHHPL) and 94-110 (RRRK…RRRP). Phosphoserine occurs at positions 113, 132, 144, 170, and 172. A compositionally biased stretch (acidic residues) spans 120-133 (TIEEGEEDEDEASE). Low complexity predominate over residues 141–155 (TQPSPVSTPSSVQFF). Positions 189–207 (GAQAGTQVEEAEAVAVASG) are enriched in low complexity. Residues 208–217 (TAGGDDGGAS) are compositionally biased toward gly residues. Phosphoserine is present on serine 241. Residue threonine 255 is modified to Phosphothreonine. Lysine 272 is modified (N6-methyllysine). A disordered region spans residues 285–318 (HLVRKNAKGSTQSGREGREPGPTPRARPRAPHKP). Residue serine 441 is modified to Phosphoserine. A disordered region spans residues 447–468 (SLLGHHHGQGAESDPHVTEPLI). 2 membrane (anion exchange) regions span residues 706–1239 (CLAA…PMPV) and 708–1239 (AAVI…PMPV). 4 consecutive transmembrane segments (helical) span residues 707–727 (LAAV…FGGL), 752–772 (FCLL…LLVF), 794–814 (IGFW…SFLV), and 824–844 (IFAF…LVKI). At 845–895 (FQEHPLHGCSASNSSEVDGGENMTWAVARPTLGPGNRSLAGQSGQGKPRGQ) the chain is on the extracellular side. 3 N-linked (GlcNAc...) asparagine glycosylation sites follow: asparagine 857, asparagine 866, and asparagine 880. A helical transmembrane segment spans residues 896-916 (PNTALLSLVLMAGTFFIAFFL). Residues 917 to 931 (RKFKNSRFFPGRIRR) lie on the Cytoplasmic side of the membrane. A run of 5 helical transmembrane segments spans residues 932–952 (VIGD…DYSI), 987–1007 (FPVW…ILIF), 1034–1054 (LLLI…WLAA), 1088–1108 (RVTG…GDLL), and 1111–1131 (IPLA…LNGI). Cysteine 1171 carries the S-palmitoyl cysteine lipid modification. A helical membrane pass occupies residues 1172–1192 (LALLWAVMSTAASLAFPFILI).

Belongs to the anion exchanger (TC 2.A.31) family.

Its subcellular location is the apical cell membrane. The protein localises to the basolateral cell membrane. It carries out the reaction hydrogencarbonate(in) + chloride(out) = hydrogencarbonate(out) + chloride(in). In terms of biological role, sodium-independent anion exchanger which mediates the electroneutral exchange of chloride for bicarbonate ions across the cell membrane. Plays an important role in osteoclast differentiation and function. Regulates bone resorption and calpain-dependent actin cytoskeleton organization in osteoclasts via anion exchange-dependent control of pH. Essential for intracellular pH regulation in CD8(+) T-cells upon CD3 stimulation, modulating CD8(+) T-cell response. The sequence is that of Anion exchange protein 2 (SLC4A2) from Pongo abelii (Sumatran orangutan).